The chain runs to 149 residues: UPF0756 membrane protein BBR47_32760 (149 aa).

5 consecutive transmembrane segments (helical) span residues 3-23, 48-68, 85-105, 106-126, and 128-148; these read WISIILLVLLALGVIGNNATV, HGLQLGIIILTIGIMTPLASG, LLAVAVGMFVAYLAGKGTVLM, SQNPLIVTGLLLGTIAGVTFF, and GVAVGPLIAAGILAFILQFLP.

This sequence belongs to the UPF0756 family.

Its subcellular location is the cell membrane. The sequence is that of UPF0756 membrane protein BBR47_32760 from Brevibacillus brevis (strain 47 / JCM 6285 / NBRC 100599).